The primary structure comprises 696 residues: Junctophilin-2 (696 aa).

Topologically, residues 1–674 (MSGGRFDFDD…EVEVEEVPNT (674 aa)) are cytoplasmic. 6 MORN repeats span residues 14–36 (YCGG…KGQG), 38–59 (YSGS…SGNT), 60–79 (FEGY…TKGR), 82–104 (YKGE…NSGA), 106–128 (YEGT…DGGT), and 129–151 (YQGQ…PYGM). 2 positions are modified to phosphoserine: S162 and S165. Disordered stretches follow at residues 164-192 (SSLR…SPPV) and 246-273 (LSSG…AAPF). 2 MORN repeats span residues 285-307 (YMGE…SGLR) and 308-330 (YEGE…DGHR). The short motif at 345-359 (KRRVLPLKSSKVRQK) is the Bipartite nuclear localization signal element. Residues 439-664 (NSESLLEPPE…RKEVAQAKEA (226 aa)) form a disordered region. 3 positions are modified to phosphoserine: S440, S442, and S462. Residues 457 to 471 (ERPRESPQLHERETP) are compositionally biased toward basic and acidic residues. T470 is subject to Phosphothreonine. Pro residues predominate over residues 474–487 (EGGPPSPAGTPPQP). S479 is modified (phosphoserine). Position 483 is a phosphothreonine (T483). Residues 488–492 (KRPRP) carry the Nuclear localization signal motif. Residues S527 and S533 each carry the phosphoserine modification. A compositionally biased stretch (acidic residues) spans 573–585 (PLEDEQEPEPEPE). 3 positions are modified to phosphoserine: S593, S597, and S613. Basic and acidic residues predominate over residues 631–644 (AEPKAKARKTEARG). A helical; Anchor for type IV membrane protein membrane pass occupies residues 675 to 695 (VLICMVILLNIGLAILFVHLL).

The protein belongs to the junctophilin family. In terms of assembly, interacts with TRPC3. Interacts with BAG5 and HSPA8; the interaction with HSPA8 is increased in the presence of BAG5. As to quaternary structure, interacts with MEF2C. Post-translationally, proteolytically cleaved by calpain in response to cardiac stress. The major cleavage site takes place at the C-terminus and leads to the release of the Junctophilin-2 N-terminal fragment chain (JP2NT). Phosphorylation on Ser-165, probably by PKC, affects RYR1-mediated calcium ion release, interaction with TRPC3, and skeletal muscle myotubule development. Abundantly expressed in skeletal muscle and heart. Weak expression in stomach and lung.

It is found in the cell membrane. Its subcellular location is the sarcoplasmic reticulum membrane. The protein resides in the endoplasmic reticulum membrane. The protein localises to the nucleus. Its function is as follows. Membrane-binding protein that provides a structural bridge between the plasma membrane and the sarcoplasmic reticulum and is required for normal excitation-contraction coupling in cardiomyocytes. Provides a structural foundation for functional cross-talk between the cell surface and intracellular Ca(2+) release channels by maintaining the 12-15 nm gap between the sarcolemma and the sarcoplasmic reticulum membranes in the cardiac dyads. Necessary for proper intracellular Ca(2+) signaling in cardiac myocytes via its involvement in ryanodine receptor-mediated calcium ion release. Contributes to the construction of skeletal muscle triad junctions. Functionally, transcription repressor required to safeguard against the deleterious effects of cardiac stress. Generated following cleavage of the Junctophilin-2 chain by calpain in response to cardiac stress in cardiomyocytes. Following cleavage and release from the membrane, translocates to the nucleus, binds DNA and represses expression of genes implicated in cell growth and differentiation, hypertrophy, inflammation and fibrosis. Modifies the transcription profile and thereby attenuates pathological remodeling in response to cardiac stress. Probably acts by competing with MEF2 transcription factors and TATA-binding proteins. The chain is Junctophilin-2 from Mus musculus (Mouse).